A 499-amino-acid chain; its full sequence is Cysteine--tRNA ligase (499 aa).

Position 30 (C30) interacts with Zn(2+). The short motif at 32 to 42 (PTVYDRAHLGN) is the 'HIGH' region element. Residues C221, H246, and E250 each coordinate Zn(2+). Residues 279 to 283 (KMSKS) carry the 'KMSKS' region motif. K282 contacts ATP.

This sequence belongs to the class-I aminoacyl-tRNA synthetase family. Monomer. Zn(2+) serves as cofactor.

The protein resides in the cytoplasm. It catalyses the reaction tRNA(Cys) + L-cysteine + ATP = L-cysteinyl-tRNA(Cys) + AMP + diphosphate. The sequence is that of Cysteine--tRNA ligase from Cereibacter sphaeroides (strain ATCC 17023 / DSM 158 / JCM 6121 / CCUG 31486 / LMG 2827 / NBRC 12203 / NCIMB 8253 / ATH 2.4.1.) (Rhodobacter sphaeroides).